The following is an 868-amino-acid chain: DNA mismatch repair protein MutS (868 aa).

G620–S627 contributes to the ATP binding site.

The protein belongs to the DNA mismatch repair MutS family.

Its function is as follows. This protein is involved in the repair of mismatches in DNA. It is possible that it carries out the mismatch recognition step. This protein has a weak ATPase activity. This chain is DNA mismatch repair protein MutS, found in Flavobacterium johnsoniae (strain ATCC 17061 / DSM 2064 / JCM 8514 / BCRC 14874 / CCUG 350202 / NBRC 14942 / NCIMB 11054 / UW101) (Cytophaga johnsonae).